The following is a 316-amino-acid chain: DNA-directed RNA polymerase III subunit RPC6 (316 aa).

A2 carries the N-acetylalanine modification. Glycyl lysine isopeptide (Lys-Gly) (interchain with G-Cter in SUMO2) cross-links involve residues K5 and K7. The [4Fe-4S] cluster site is built by C287, C290, C296, and C307.

It belongs to the eukaryotic RPC34/RPC39 RNA polymerase subunit family. As to quaternary structure, component of the RNA polymerase III complex consisting of 17 subunits: a ten-subunit horseshoe-shaped catalytic core composed of POLR3A/RPC1, POLR3B/RPC2, POLR1C/RPAC1, POLR1D/RPAC2, POLR3K/RPC10, POLR2E/RPABC1, POLR2F/RPABC2, POLR2H/RPABC3, POLR2K/RPABC4 and POLR2L/RPABC5; a mobile stalk composed of two subunits POLR3H/RPC8 and CRCP/RPC9, protruding from the core and functioning primarily in transcription initiation; and additional subunits homologous to general transcription factors of the RNA polymerase II machinery, POLR3C/RPC3-POLR3F/RPC6-POLR3G/RPC7 heterotrimer required for transcription initiation and POLR3D/RPC4-POLR3E/RPC5 heterodimer involved in both transcription initiation and termination. Directly interacts with POLR3C. Interacts with TBP and TFIIIB90 and GTF3C4. Interacts with MAF1. As part of the RNA polymerase III complex, interacts with PKP2.

It is found in the nucleus. Its function is as follows. DNA-dependent RNA polymerase catalyzes the transcription of DNA into RNA using the four ribonucleoside triphosphates as substrates. Specific peripheric component of RNA polymerase III (Pol III) which synthesizes small non-coding RNAs including 5S rRNA, snRNAs, tRNAs and miRNAs from at least 500 distinct genomic loci. Part of POLR3C/RPC3-POLR3F/RPC6-POLR3G/RPC7 heterotrimer that coordinates the dynamics of Pol III stalk and clamp modules during the transition from apo to elongation state. Pol III plays a key role in sensing and limiting infection by intracellular bacteria and DNA viruses, including varicella zoster virus. Acts as a nuclear and cytosolic DNA sensor detecting AT-rich DNA, involved in innate immune response. Can sense non-self dsDNA that serves as template for transcription into dsRNA. The non-self RNA polymerase III transcripts, such as Epstein-Barr virus-encoded RNAs (EBERs) induce type I interferon and NF-kappa-B through the RIG-I pathway. Preferentially binds double-stranded DNA (dsDNA). The chain is DNA-directed RNA polymerase III subunit RPC6 (POLR3F) from Bos taurus (Bovine).